Consider the following 290-residue polypeptide: ADP-ribosylation factor-like protein 13A (290 aa).

Residues 28–35 (GLNNSGKT), 71–75 (DLNGD), and 130–133 (NKQD) contribute to the GTP site. The disordered stretch occupies residues 204-226 (SKNNTGSGERCSSHSFSTRTGMS).

This sequence belongs to the small GTPase superfamily. Arf family.

In Homo sapiens (Human), this protein is ADP-ribosylation factor-like protein 13A (ARL13A).